A 186-amino-acid chain; its full sequence is RIO-type serine/threonine-protein kinase Rio1 (186 aa).

Lys-15 lines the ATP pocket. Residue Asp-124 is the Proton acceptor of the active site. Residues Asn-129 and Asp-140 each contribute to the Mg(2+) site. Catalysis depends on Asp-140, which acts as the 4-aspartylphosphate intermediate.

Belongs to the protein kinase superfamily. RIO-type Ser/Thr kinase family.

The enzyme catalyses L-seryl-[protein] + ATP = O-phospho-L-seryl-[protein] + ADP + H(+). The catalysed reaction is L-threonyl-[protein] + ATP = O-phospho-L-threonyl-[protein] + ADP + H(+). It carries out the reaction ATP + H2O = ADP + phosphate + H(+). Functionally, despite the protein kinase domain is proposed to act predominantly as an ATPase. This chain is RIO-type serine/threonine-protein kinase Rio1 (rio1), found in Thermoplasma acidophilum (strain ATCC 25905 / DSM 1728 / JCM 9062 / NBRC 15155 / AMRC-C165).